Consider the following 475-residue polypeptide: Ribulose bisphosphate carboxylase large chain (475 aa).

Residues 1 to 2 constitute a propeptide that is removed on maturation; the sequence is MA. The residue at position 3 (proline 3) is an N-acetylproline. At lysine 14 the chain carries N6,N6,N6-trimethyllysine. The substrate site is built by asparagine 123 and threonine 173. Lysine 175 (proton acceptor) is an active-site residue. Lysine 177 contributes to the substrate binding site. Positions 201, 203, and 204 each coordinate Mg(2+). Lysine 201 carries the post-translational modification N6-carboxylysine. Histidine 294 acts as the Proton acceptor in catalysis. The substrate site is built by arginine 295, histidine 327, and serine 379.

The protein belongs to the RuBisCO large chain family. Type I subfamily. Heterohexadecamer of 8 large chains and 8 small chains. Mg(2+) is required as a cofactor.

It is found in the plastid. Its subcellular location is the chloroplast. The catalysed reaction is 2 (2R)-3-phosphoglycerate + 2 H(+) = D-ribulose 1,5-bisphosphate + CO2 + H2O. It catalyses the reaction D-ribulose 1,5-bisphosphate + O2 = 2-phosphoglycolate + (2R)-3-phosphoglycerate + 2 H(+). Functionally, ruBisCO catalyzes two reactions: the carboxylation of D-ribulose 1,5-bisphosphate, the primary event in carbon dioxide fixation, as well as the oxidative fragmentation of the pentose substrate in the photorespiration process. Both reactions occur simultaneously and in competition at the same active site. This chain is Ribulose bisphosphate carboxylase large chain, found in Nephroselmis olivacea (Green alga).